The primary structure comprises 741 residues: MSQDQQQQQQFNANNLAGNVQNINLNAPAYDPAVQSYIPNTAQAFVPSAQPYIPGQQEQQFGQYGQQQQNYNQGGYNNYNNRGGYSNNRGGYNNSNRGGYSNYNSYNTNSNQGGYSNYNNNYANNSYNNNNNYNNNYNQGYNNYNSQPQGQDQQQETGSGQMSLEDYQKQQKESLNKLNTKPKKVLKLNLNSSTVKAPIVTKKKEEEPVNQESKTEEPAKEEIKNQEPAEAENKVEEESKVEAPTAAKPVSESEFPASTPKTEAKASKEVAAAAAALKKEVSQAKKESNVTNADALVKEQEEQIDASIVNDMFGGKDHMSIIFMGHVDAGKSTMGGNLLFLTGAVDKRTVEKYEREAKDAGRQGWYLSWIMDTNKEERNDGKTIEVGKSYFETDKRRYTILDAPGHKLYISEMIGGASQADVGVLVISSRKGEYEAGFERGGQSREHAILAKTQGVNKLVVVINKMDDPTVNWSKERYEECTTKLAMYLKGVGYQKGDVLFMPVSGYTGAGLKERVSQKDAPWYNGPSLLEYLDSMPLAVRKINDPFMLPISSKMKDLGTVIEGKIESGHVKKGQNLLVMPNKTQVEVTTIYNETEAEADSAFCGEQVRLRLRGIEEEDLSAGYVLSSINHPVKTVTRFEAQIAIVELKSILSTGFSCVMHVHTAIEEVTFTQLLHNLQKGTNRRSKKAPAFAKQGMKIIAVLETTEPVCIESYDDYPQLGRFTLRDQGQTIAIGKVTKLL.

The several sort of repeats stretch occupies residues 5–135 (QQQQQQFNAN…SYNNNNNYNN (131 aa)). The span at 59–161 (QQFGQYGQQQ…DQQQETGSGQ (103 aa)) shows a compositional bias: low complexity. Disordered stretches follow at residues 59–186 (QQFG…KKVL) and 199–264 (IVTK…KTEA). The interval 162 to 311 (MSLEDYQKQQ…EQIDASIVND (150 aa)) is charged. Composition is skewed to basic and acidic residues over residues 166–175 (DYQKQQKESL) and 202–241 (KKKE…ESKV). The tr-type G domain maps to 316-541 (KDHMSIIFMG…YLDSMPLAVR (226 aa)). The segment at 325-332 (GHVDAGKS) is G1. 325 to 332 (GHVDAGKS) is a GTP binding site. A G2 region spans residues 381-385 (GKTIE). Residue Thr399 is modified to Phosphothreonine. The interval 402–405 (DAPG) is G3. GTP is bound by residues 402-406 (DAPGH) and 464-467 (NKMD). A G4 region spans residues 464–467 (NKMD). Residues 505 to 507 (SGY) are G5.

It belongs to the TRAFAC class translation factor GTPase superfamily. Classic translation factor GTPase family. ERF3 subfamily.

It localises to the cytoplasm. In terms of biological role, involved in translation termination. Stimulates the activity of ERF1. Binds guanine nucleotides. In Ogataea pini (Yeast), this protein is Eukaryotic peptide chain release factor GTP-binding subunit (SUP2).